A 343-amino-acid polypeptide reads, in one-letter code: S-adenosylmethionine:tRNA ribosyltransferase-isomerase (343 aa).

The protein belongs to the QueA family. Monomer.

Its subcellular location is the cytoplasm. The enzyme catalyses 7-aminomethyl-7-carbaguanosine(34) in tRNA + S-adenosyl-L-methionine = epoxyqueuosine(34) in tRNA + adenine + L-methionine + 2 H(+). The protein operates within tRNA modification; tRNA-queuosine biosynthesis. In terms of biological role, transfers and isomerizes the ribose moiety from AdoMet to the 7-aminomethyl group of 7-deazaguanine (preQ1-tRNA) to give epoxyqueuosine (oQ-tRNA). In Stenotrophomonas maltophilia (strain R551-3), this protein is S-adenosylmethionine:tRNA ribosyltransferase-isomerase.